Consider the following 804-residue polypeptide: MVKDTYISSASKTPPMERTVRVTGMTCAMCVKSIETAVGSLEGVEEVRVNLATETAFIRFDEKRIDFETIKRVIEDLGYGVVDEQAAVSAEVEHLSRMKRKLYVAAFAGVLLLFLAHFISLPYEDFVQLLIALPAIFYSGSSIFKAAFSALRRRTLNMDVMYSMGVGAAFLASVLSTAGVLPREYSFYETSVLLLAFLLLGRTLEARAKSRTGEAIKKLVGLQAKTAVVIRDGKEIAVPVEEVAVGDIVIVRPGEKIPVDGVVVEGESYVDESMISGEPVPVLKSKGDEVFGATINNTGVLKIRATRVGGETLLAQIVKLVEDAMGSKPPIQRLADKVVAYFIPTVLLVAISAFIYWYFIAHAPLLFAFTTLIAVLVVACPCAFGLATPTALTVGMGKGAELGILIKNADALEVAEKVTAVIFDKTGTLTKGKPEVTDLVPLNGDERELLRLAAIAERRSEHPIAEAIVKKALEHGIELGEPEKVEVIAGEGVVADGILVGNKRLMEDFGVAVSNEVELALEKLEREAKTAVIVARNGRVEGIIAVSDTLKESAKPAVQELKRMGIKVGMITGDNWRSAEAISRELNLDLVIAEVLPHQKSEEVKKLQAKEVVAFVGDGINDAPALAQADLGIAVGSGSDVAVESGDIVLIRDDLRDVVAAIQLSRKTMSKIKQNIFWALIYNVILIPAAAGLLYPIFGVVFRPEFAGLAMAMSSVSVVANSLLLRNYVPPIRRGGDSVEKIVLELSGLSCHHCVARVKKALEEAGAKVEKVDLNEAVVAGNKEDVDKYIKAVEAAGYQAKLRS.

Over 1 to 101 the chain is Cytoplasmic; the sequence is MVKDTYISSA…VEHLSRMKRK (101 aa). Residues 16–82 enclose the HMA 1 domain; it reads MERTVRVTGM…VIEDLGYGVV (67 aa). Residues C27 and C30 each contribute to the Cu(+) site. A helical membrane pass occupies residues 102–122; it reads LYVAAFAGVLLLFLAHFISLP. Over 123–128 the chain is Extracellular; sequence YEDFVQ. A helical transmembrane segment spans residues 129 to 149; sequence LLIALPAIFYSGSSIFKAAFS. The Cytoplasmic segment spans residues 150–159; the sequence is ALRRRTLNMD. A helical transmembrane segment spans residues 160–180; sequence VMYSMGVGAAFLASVLSTAGV. Residues 181–186 are Extracellular-facing; sequence LPREYS. The helical transmembrane segment at 187 to 204 threads the bilayer; it reads FYETSVLLLAFLLLGRTL. The Cytoplasmic segment spans residues 205–339; the sequence is EARAKSRTGE…PIQRLADKVV (135 aa). A helical membrane pass occupies residues 340–360; it reads AYFIPTVLLVAISAFIYWYFI. Topologically, residues 361–364 are extracellular; it reads AHAP. A helical membrane pass occupies residues 365–385; sequence LLFAFTTLIAVLVVACPCAFG. The Cytoplasmic segment spans residues 386–680; the sequence is LATPTALTVG…KIKQNIFWAL (295 aa). The active-site 4-aspartylphosphate intermediate is the D424. ATP is bound by residues 457-462 and 490-501; these read ERRSEH and GEGVVADGILVG. 2 residues coordinate Mg(2+): D618 and D622. A helical membrane pass occupies residues 681 to 701; that stretch reads IYNVILIPAAAGLLYPIFGVV. Residues 702-704 are Extracellular-facing; that stretch reads FRP. Residues 705–725 form a helical membrane-spanning segment; sequence EFAGLAMAMSSVSVVANSLLL. Residues 726–804 are Cytoplasmic-facing; that stretch reads RNYVPPIRRG…AAGYQAKLRS (79 aa). One can recognise an HMA 2 domain in the interval 740–801; the sequence is EKIVLELSGL…AVEAAGYQAK (62 aa). Cu(+) is bound by residues C751 and C754.

This sequence belongs to the cation transport ATPase (P-type) (TC 3.A.3) family. Type IB subfamily. Interacts with CopZ probably in the CopZ Cu(+)-bound form.

The protein resides in the cell membrane. The enzyme catalyses Cu(+)(in) + ATP + H2O = Cu(+)(out) + ADP + phosphate + H(+). Activated by Cu(+) and Ag(+) and inhibited by vanadate. Activated by CopZ in its Cu(+)-bound form. Its function is as follows. Probably involved in copper and silver export. This chain is Probable copper-exporting P-type ATPase (copA), found in Archaeoglobus fulgidus (strain ATCC 49558 / DSM 4304 / JCM 9628 / NBRC 100126 / VC-16).